The sequence spans 169 residues: Small ribosomal subunit protein uS13c (169 aa).

The transit peptide at M1–C47 directs the protein to the chloroplast.

The protein belongs to the universal ribosomal protein uS13 family. Part of the 30S ribosomal subunit.

It localises to the plastid. The protein localises to the chloroplast. Located at the top of the head of the 30S subunit, it contacts several helices of the 16S rRNA. In Arabidopsis thaliana (Mouse-ear cress), this protein is Small ribosomal subunit protein uS13c (RPS13).